Here is a 3262-residue protein sequence, read N- to C-terminus: Striated muscle-specific serine/threonine-protein kinase (3262 aa).

The segment at 1–33 is disordered; sequence MQKARGTRGEDAGTRAPPSPGVPPKRAKVGAGR. Arg33 bears the Omega-N-methylarginine mark. The Ig-like 1 domain occupies 45-126; that stretch reads PVFLRPLKNA…GQASCEAVLT (82 aa). Ser141 is modified (phosphoserine). 4 disordered regions span residues 155 to 185, 198 to 226, 280 to 720, and 814 to 875; these read RAFS…TSEE, EQEA…GPRH, GLHR…VSAG, and LAVR…APPT. A compositionally biased stretch (polar residues) spans 158–185; it reads STPTGGSDTLVGTSLDTPPTSVTGTSEE. A compositionally biased stretch (pro residues) spans 301–317; it reads PALPPPSKSALLPPPSP. Ser368 and Ser375 each carry phosphoserine. The residue at position 379 (Thr379) is a Phosphothreonine. Ser382 and Ser385 each carry phosphoserine. Positions 404–422 are enriched in basic and acidic residues; that stretch reads ILDKLQFFEERRRSLERSD. Residue Ser423 is modified to Phosphoserine. Thr453 carries the phosphothreonine modification. Ser457, Ser463, Ser493, Ser511, and Ser531 each carry phosphoserine. The segment covering 459-473 has biased composition (basic and acidic residues); that stretch reads EELRSPRGSVAERRR. Residues 510-522 show a composition bias toward basic and acidic residues; it reads TSREELVRSHESL. Residues 543–552 show a composition bias toward polar residues; sequence RPSTPKTSRA. At Ser554 the chain carries Phosphoserine. 2 stretches are compositionally biased toward basic and acidic residues: residues 624 to 638 and 663 to 680; these read PESR…KREP and EKNR…RGPE. One can recognise an Ig-like 2 domain in the interval 727 to 815; the sequence is PVFEIPLQNM…GQATCASSLA (89 aa). Positions 820–830 are enriched in polar residues; it reads GSTSPFSSPIT. Ig-like domains follow at residues 874 to 963, 968 to 1062, and 1069 to 1157; these read PTFK…ARLE, PESR…ARLT, and PLFT…AQLY. Cysteines 994 and 1046 form a disulfide. 2 positions are modified to phosphoserine: Ser1133 and Ser1177. The interval 1162-1185 is disordered; the sequence is RTAASGPSSKLEKMPSIPEEPEHG. Residues 1193–1283 enclose the Ig-like 6 domain; the sequence is PDFLRPLQDL…AACYAHLYVT (91 aa). The Fibronectin type-III 1 domain occupies 1290-1387; sequence PDGAPEVVAV…PSEPVQLLEH (98 aa). Ig-like domains follow at residues 1389-1485 and 1490-1578; these read PPLE…VTLE and PRFE…AELS. The cysteines at positions 1413 and 1469 are disulfide-linked. The Protein kinase 1 domain occupies 1606–1859; it reads YDIHQEIGRG…AEETLEHPWF (254 aa). ATP-binding positions include 1612–1620 and Lys1635; that span reads IGRGAFSYL. Asp1724 (proton acceptor) is an active-site residue. The disordered stretch occupies residues 1913–2571; it reads MPRRQPPSGG…SQPNLSSSVQ (659 aa). The span at 1918–1927 shows a compositional bias: low complexity; the sequence is PPSGGLSSSS. The segment covering 1980 to 1990 has biased composition (basic and acidic residues); sequence EQERTPSKDQE. 5 positions are modified to phosphoserine: Ser1993, Ser2004, Ser2019, Ser2020, and Ser2042. Over residues 2009-2019 the composition is skewed to basic and acidic residues; it reads SPRRPELRRGS. Arg2060 is subject to Asymmetric dimethylarginine; alternate. Arg2060 carries the post-translational modification Omega-N-methylarginine; alternate. Residues 2069–2081 show a composition bias toward low complexity; it reads AQRLQALRQRLLR. Phosphoserine occurs at positions 2114 and 2135. Omega-N-methylarginine is present on Arg2144. The span at 2168–2179 shows a compositional bias: polar residues; it reads ESPSLSALSETQ. Ser2182 and Ser2207 each carry phosphoserine. A compositionally biased stretch (polar residues) spans 2193–2207; it reads ITKSPEPSAVTSRDS. The segment covering 2208–2218 has biased composition (pro residues); it reads PQPPEPQPVPE. Residues 2219–2229 are compositionally biased toward basic and acidic residues; it reads KVPEPKPEPVR. Over residues 2230 to 2268 the composition is skewed to low complexity; it reads AAKPAQPPLALQMPTQPLTPYAQIMQSLQLSSPTLSPQD. Residues 2337–2348 are compositionally biased toward basic and acidic residues; sequence FEAKFKRSRESP. Residues 2349-2358 show a composition bias toward low complexity; sequence LSRGLRLLSR. The segment covering 2359-2375 has biased composition (basic and acidic residues); it reads SRSEERGPFRGAEDDGI. Position 2379 is a phosphoserine (Ser2379). Position 2383 is a phosphothreonine (Thr2383). The span at 2387–2398 shows a compositional bias: basic and acidic residues; the sequence is LVRRPERSRSVQ. 6 positions are modified to phosphoserine: Ser2413, Ser2417, Ser2441, Ser2442, Ser2447, and Ser2451. Low complexity predominate over residues 2461–2487; that stretch reads SSTLERLSSRLQRSGSSEDSGGASGRS. Polar residues predominate over residues 2513–2523; that stretch reads QLGSQTGATTP. A phosphoserine mark is found at Ser2524 and Ser2527. Positions 2524-2543 are enriched in low complexity; the sequence is SAESLGSEASGTSGSSAPGE. Residues 2546-2557 are compositionally biased toward basic residues; the sequence is SRHRWGLSRLRK. Ser2562 bears the Phosphoserine mark. Residues 2562–2571 show a composition bias toward polar residues; that stretch reads SQPNLSSSVQ. The region spanning 2586–2676 is the Ig-like 9 domain; it reads PPVFHIKLKD…GSITSSCTVA (91 aa). Cys2608 and Cys2660 are joined by a disulfide. A Fibronectin type-III 2 domain is found at 2683 to 2777; it reads KLAPPEVPQT…KVFIRGTPDS (95 aa). 3 disordered regions span residues 2756-2832, 2857-2899, and 2912-2960; these read RAGQ…MSAN, ATQQ…PAPS, and APPA…PQKP. Thr2774 carries the post-translational modification Phosphothreonine. 2 stretches are compositionally biased toward low complexity: residues 2775–2789 and 2803–2831; these read PDSP…RDAP and PTSL…SMSA. A Phosphoserine modification is found at Ser2777. In terms of domain architecture, Fibronectin type-III 3 spans 2865 to 2968; the sequence is PPSIVVTPSE…KPYTFLEEKA (104 aa). A compositionally biased stretch (polar residues) spans 2883 to 2899; sequence GTLTPTSSPQGVKPAPS. Residues 2913-2927 show a composition bias toward pro residues; that stretch reads PPAPQAPAPEPPPEP. Polar residues predominate over residues 2943–2953; that stretch reads SSPTPESTTLR. A Phosphoserine modification is found at Ser2944. Residues 2946-3213 enclose the Protein kinase 2 domain; sequence TPESTTLRQG…LQDCLAHPWL (268 aa). Catalysis depends on Asp3080, which acts as the Proton acceptor.

It belongs to the protein kinase superfamily. CAMK Ser/Thr protein kinase family. In terms of assembly, interacts with MTM1. Isoform 3 is found as a monomer or homodimer. Post-translationally, may be autophosphorylated. Isoform 1 is preferentially expressed in striated muscle. Non-kinase form such as isoform 3 is predominantly expressed in the aorta. Isoform 3 appears to be expressed only in highly differentiated ASMC in normal vessel walls and down-regulated in dedifferentiated ASMC in vivo. In response to vascular injuries ASMC dedifferentiate and change from a quiescent and contractile phenotype to a proliferative and synthetic phenotype. This proliferation of vascular smooth muscle cells is one of the most prominent features of atherosclerosis. Isoform 1 and isoform 4 are expressed in cardiomyocytes of the developing heart.

It localises to the nucleus. The enzyme catalyses L-seryl-[protein] + ATP = O-phospho-L-seryl-[protein] + ADP + H(+). The catalysed reaction is L-threonyl-[protein] + ATP = O-phospho-L-threonyl-[protein] + ADP + H(+). In terms of biological role, isoform 3 may have a role in regulating the growth and differentiation of arterial smooth muscle cells. In Mus musculus (Mouse), this protein is Striated muscle-specific serine/threonine-protein kinase (Speg).